Consider the following 180-residue polypeptide: Large ribosomal subunit protein uL6 (180 aa).

This sequence belongs to the universal ribosomal protein uL6 family. As to quaternary structure, part of the 50S ribosomal subunit.

In terms of biological role, this protein binds to the 23S rRNA, and is important in its secondary structure. It is located near the subunit interface in the base of the L7/L12 stalk, and near the tRNA binding site of the peptidyltransferase center. The protein is Large ribosomal subunit protein uL6 of Lachnoclostridium phytofermentans (strain ATCC 700394 / DSM 18823 / ISDg) (Clostridium phytofermentans).